The chain runs to 253 residues: Methionine aminopeptidase (253 aa).

Residue His78 coordinates substrate. Positions 95, 106, and 169 each coordinate a divalent metal cation. His176 is a substrate binding site. A divalent metal cation is bound by residues Glu206 and Glu237.

The protein belongs to the peptidase M24A family. Methionine aminopeptidase type 1 subfamily. Monomer. The cofactor is Co(2+). It depends on Zn(2+) as a cofactor. Mn(2+) is required as a cofactor. Requires Fe(2+) as cofactor.

The enzyme catalyses Release of N-terminal amino acids, preferentially methionine, from peptides and arylamides.. Removes the N-terminal methionine from nascent proteins. The N-terminal methionine is often cleaved when the second residue in the primary sequence is small and uncharged (Met-Ala-, Cys, Gly, Pro, Ser, Thr, or Val). Requires deformylation of the N(alpha)-formylated initiator methionine before it can be hydrolyzed. The polypeptide is Methionine aminopeptidase (Helicobacter pylori (strain J99 / ATCC 700824) (Campylobacter pylori J99)).